A 1523-amino-acid polypeptide reads, in one-letter code: ATP-binding cassette sub-family C member 3 (1523 aa).

At 1-35 (MDRLCGSGELGSKFWDSNLSIYTNTPDLTPCFQNS) the chain is on the extracellular side. The N-linked (GlcNAc...) asparagine glycan is linked to Asn-18. The helical transmembrane segment at 36–56 (LLAWVPCIYLWAALPCYLFYL) threads the bilayer. Residues 57-75 (RHHQLGYIVLSWLSRLKTA) lie on the Cytoplasmic side of the membrane. A helical transmembrane segment spans residues 76-96 (LGVLLWCVSWVDLFYSFHGLI). Over 97-102 (HGSSPA) the chain is Extracellular. The chain crosses the membrane as a helical span at residues 103-123 (PVFFVTPLVVGITMLLATLLI). The Cytoplasmic segment spans residues 124–129 (QYERLR). The chain crosses the membrane as a helical span at residues 130–150 (GVQSSGVLIIFWLLCVICAII). Over 151–170 (PFRSKILSALAEGKILDPFR) the chain is Extracellular. The chain crosses the membrane as a helical span at residues 171 to 191 (FTTFYIYFALVFCALILSCFK). The Cytoplasmic portion of the chain corresponds to 192 to 301 (EKPPLFSPEN…KSKQPSFLRA (110 aa)). A helical membrane pass occupies residues 302–324 (LVRTFTSSLLMSACFNLIQNLLG). An ABC transmembrane type-1 1 domain is found at 310-593 (LLMSACFNLI…LPQLISGLTQ (284 aa)). Residues 325-345 (FVNPQLLSILIRFISDPTAPT) lie on the Extracellular side of the membrane. A helical membrane pass occupies residues 346 to 366 (WWGFLLAGLMFLSSTMQTLIL). Topologically, residues 367–419 (HQYYHCIFVMALRLRTAIIGVIYRKALVITNSVKRESTVGEMVNLMSVDAQRF) are cytoplasmic. A helical membrane pass occupies residues 420-440 (MDVSPFINLLWSAPLQVILAI). A topological domain (extracellular) is located at residue Tyr-441. A helical membrane pass occupies residues 442-462 (FLWQILGPSALAGVAVIVLLI). The Cytoplasmic segment spans residues 463–535 (PLNGAVSMKM…KGAYLQAIST (73 aa)). A helical membrane pass occupies residues 536–556 (FIWICTPFLVTLITLGVYVYV). Residues 557-567 (DESNVLDAEKA) are Extracellular-facing. The helical transmembrane segment at 568-588 (FVSLSLFNILKIPLNMLPQLI) threads the bilayer. The Cytoplasmic segment spans residues 589-967 (SGLTQASVSL…YAKSMGLCTT (379 aa)). Positions 626-850 (ITIHNGTFTW…DGSFANFLRN (225 aa)) constitute an ABC transporter 1 domain. 660–667 (GPVGCGKS) provides a ligand contact to ATP. Residues Ser-903 and Ser-906 each carry the phosphoserine modification. Residues 903-915 (SSLSSEGEVQNRT) are compositionally biased toward polar residues. Positions 903 to 923 (SSLSSEGEVQNRTMPKKHTNS) are disordered. The region spanning 967–1248 (TLSICLLYGG…MIRMISDLES (282 aa)) is the ABC transmembrane type-1 2 domain. Residues 968–988 (LSICLLYGGQSAAAIGANVWL) traverse the membrane as a helical segment. Topologically, residues 989–1013 (SAWSNDAEEHGQQNKTSVRLGVYAA) are extracellular. The N-linked (GlcNAc...) asparagine glycan is linked to Asn-1002. The helical transmembrane segment at 1014–1034 (LGILQGLLVMLSAFTMVVGAI) threads the bilayer. Residues 1035–1071 (QAARLLHEALLHNKIRSPQSFFDTTPSGRILNRFSKD) are Cytoplasmic-facing. The helical transmembrane segment at 1072–1092 (IYVIDEVLAPTILMLLNSFFT) threads the bilayer. The Extracellular portion of the chain corresponds to 1093–1096 (SIST). Residues 1097–1117 (IMVIVASTPLFMVVVLPLAVL) form a helical membrane-spanning segment. Residues 1118 to 1191 (YGFVQRFYVA…YPYIASNRWL (74 aa)) are Cytoplasmic-facing. A helical membrane pass occupies residues 1192 to 1212 (GVHVEFVGNCVVLFAALFAVI). Over 1213 to 1219 (GRNSLNP) the chain is Extracellular. Residues 1220 to 1240 (GLVGLSVSYALQVTMALNWMI) form a helical membrane-spanning segment. Over 1241–1523 (RMISDLESNI…YGMAKDAGLA (283 aa)) the chain is Cytoplasmic. The ABC transporter 2 domain occupies 1287–1519 (FRNYSVRYRP…GGIFYGMAKD (233 aa)). 1319–1326 (GRTGAGKS) lines the ATP pocket.

The protein belongs to the ABC transporter superfamily. ABCC family. Conjugate transporter (TC 3.A.1.208) subfamily. In terms of tissue distribution, detected throughout the gastrointestinal tract, liver, lung, pancreas, bladder, gall bladder and at low levels in the adrenal gland.

It is found in the basolateral cell membrane. It localises to the basal cell membrane. It carries out the reaction an S-substituted glutathione(in) + ATP + H2O = an S-substituted glutathione(out) + ADP + phosphate + H(+). The enzyme catalyses ATP + H2O + xenobioticSide 1 = ADP + phosphate + xenobioticSide 2.. It catalyses the reaction 17beta-estradiol 17-O-(beta-D-glucuronate)(in) + ATP + H2O = 17beta-estradiol 17-O-(beta-D-glucuronate)(out) + ADP + phosphate + H(+). The catalysed reaction is dehydroepiandrosterone 3-sulfate(in) + ATP + H2O = dehydroepiandrosterone 3-sulfate(out) + ADP + phosphate + H(+). It carries out the reaction leukotriene C4(in) + ATP + H2O = leukotriene C4(out) + ADP + phosphate + H(+). The enzyme catalyses taurocholate(in) + ATP + H2O = taurocholate(out) + ADP + phosphate + H(+). It catalyses the reaction glycocholate(in) + ATP + H2O = glycocholate(out) + ADP + phosphate + H(+). The catalysed reaction is taurolithocholate 3-sulfate(in) + ATP + H2O = taurolithocholate 3-sulfate(out) + ADP + phosphate + H(+). It carries out the reaction taurochenodeoxycholate 3-sulfate(in) + ATP + H2O = taurochenodeoxycholate 3-sulfate(out) + ADP + phosphate + H(+). The enzyme catalyses (4Z,15Z)-bilirubin IXalpha C8-beta-D-glucuronoside(in) + ATP + H2O = (4Z,15Z)-bilirubin IXalpha C8-beta-D-glucuronoside(out) + ADP + phosphate + H(+). It catalyses the reaction (4Z,15Z)-bilirubin IXalpha C8,C12-beta-D-bisglucuronoside(in) + ATP + H2O = (4Z,15Z)-bilirubin IXalpha C8,C12-beta-D-bisglucuronoside(out) + ADP + phosphate + H(+). In terms of biological role, ATP-dependent transporter of the ATP-binding cassette (ABC) family that binds and hydrolyzes ATP to enable active transport of various substrates including many drugs, toxicants and endogenous compound across cell membranes. Transports glucuronide conjugates such as bilirubin diglucuronide, estradiol-17-beta-o-glucuronide and GSH conjugates such as leukotriene C4 (LTC4). Transports also various bile salts (taurocholate, glycocholate, taurochenodeoxycholate-3-sulfate, taurolithocholate- 3-sulfate). Does not contribute substantially to bile salt physiology but provides an alternative route for the export of bile acids and glucuronides from cholestatic hepatocytes. May contribute to regulate the transport of organic compounds in testes across the blood-testis-barrier. The polypeptide is ATP-binding cassette sub-family C member 3 (Abcc3) (Mus musculus (Mouse)).